The chain runs to 473 residues: Mitochondrial distribution and morphology protein 10 (473 aa).

This sequence belongs to the MDM10 family. In terms of assembly, component of the ER-mitochondria encounter structure (ERMES) or MDM complex, composed of MMM1, MDM10, MDM12 and MDM34. Associates with the mitochondrial outer membrane sorting assembly machinery SAM(core) complex.

The protein localises to the mitochondrion outer membrane. Component of the ERMES/MDM complex, which serves as a molecular tether to connect the endoplasmic reticulum and mitochondria. Components of this complex are involved in the control of mitochondrial shape and protein biogenesis and may function in phospholipid exchange. MDM10 is involved in the late assembly steps of the general translocase of the mitochondrial outer membrane (TOM complex). Functions in the TOM40-specific route of the assembly of outer membrane beta-barrel proteins, including the association of TOM40 with the receptor TOM22 and small TOM proteins. Can associate with the SAM(core) complex as well as the MDM12-MMM1 complex, both involved in late steps of the major beta-barrel assembly pathway, that is responsible for biogenesis of all outer membrane beta-barrel proteins. May act as a switch that shuttles between both complexes and channels precursor proteins into the TOM40-specific pathway. Plays a role in mitochondrial morphology and in the inheritance of mitochondria. This Candida albicans (strain WO-1) (Yeast) protein is Mitochondrial distribution and morphology protein 10.